A 45-amino-acid polypeptide reads, in one-letter code: Large ribosomal subunit protein bL34 (45 aa).

The protein belongs to the bacterial ribosomal protein bL34 family.

In Kineococcus radiotolerans (strain ATCC BAA-149 / DSM 14245 / SRS30216), this protein is Large ribosomal subunit protein bL34.